The primary structure comprises 462 residues: MSSVKRSLKQEIVTQFHCSAAEGDIAKLTGILSHSPSLLNETSENGWTALMYAARNGHPEIVQFLLEKGCDRSIVNKSRQTALDIAVFWGYKHIANLLATAKGGKKPWFLTNEVEECENYFSKTLLDRKSEKRNNSDWLLAKESHPATVFILFSDLNPLVTLGGNKESFQQPEVRLCQLNYTDIKDYLAQPEKITLIFLGVELEIKDKLLNYAGEVPREEEDGLVAWFALGIDPIAAEEFKQRHENCYFLHPPMPALLQLKEKEAGVVAQARSVLAWHSRYKFCPTCGNATKIEEGGYKRLCLKEDCPSLNGVHNTSYPRVDPVVIMQVIHPDGTKCLLGRQKRFPPGMFTCLAGFIEPGETIEDAVRREVEEESGVKVGHVQYVACQPWPMPSSLMIGCLALAVSTEIKVDKNEIEDARWFTREQVLDVLTKGKQQAFFVPPSRAIAHQLIKHWIRINPNL.

ANK repeat units lie at residues 11-40, 45-74, and 78-98; these read EIVT…SLLN, NGWT…DRSI, and SRQT…ANLL. Lysine 185 carries the N6-succinyllysine modification. Positions 284 and 287 each coordinate Zn(2+). Lysine 292 bears the N6-succinyllysine mark. Zn(2+) is bound by residues cysteine 302 and cysteine 307. Substrate-binding positions include tyrosine 318, 354 to 356, glutamate 370, glutamate 374, and glutamate 415; that span reads AGF. The region spanning 319–453 is the Nudix hydrolase domain; it reads PRVDPVVIMQ…SRAIAHQLIK (135 aa). Mg(2+) is bound by residues alanine 354, glutamate 370, glutamate 374, and glutamate 415. Residues 355-376 carry the Nudix box motif; sequence GFIEPGETIEDAVRREVEEESG. The Microbody targeting signal motif lies at 460 to 462; sequence PNL.

It belongs to the Nudix hydrolase family. NudC subfamily. In terms of assembly, homodimer. Homodimerization is essential for its catalytic activity and protein stability. Interacts (via ANK repeats) with BLMH. The cofactor is Mg(2+). Zn(2+) is required as a cofactor.

Its subcellular location is the cytoplasm. The protein localises to the peroxisome. The protein resides in the cytoplasmic granule. The enzyme catalyses a 5'-end NAD(+)-phospho-ribonucleoside in mRNA + H2O = a 5'-end phospho-adenosine-phospho-ribonucleoside in mRNA + beta-nicotinamide D-ribonucleotide + 2 H(+). It carries out the reaction NAD(+) + H2O = beta-nicotinamide D-ribonucleotide + AMP + 2 H(+). It catalyses the reaction NADH + H2O = reduced beta-nicotinamide D-ribonucleotide + AMP + 2 H(+). The catalysed reaction is NADPH + H2O = reduced beta-nicotinamide D-ribonucleotide + adenosine 2',5'-bisphosphate + 2 H(+). MRNA decapping enzyme that specifically removes the nicotinamide adenine dinucleotide (NAD) cap from a subset of mRNAs by hydrolyzing the diphosphate linkage to produce nicotinamide mononucleotide (NMN) and 5' monophosphate mRNA. The NAD-cap is present at the 5'-end of some RNAs; in contrast to the canonical N7 methylguanosine (m7G) cap, the NAD cap promotes mRNA decay. Preferentially acts on NAD-capped transcripts in response to nutrient stress. Also acts on free nicotinamide adenine dinucleotide molecules: hydrolyzes NAD(H) into NMN(H) and AMP, and NADPH into NMNH and 2',5'-ADP. May act to regulate the concentration of peroxisomal nicotinamide nucleotide cofactors required for oxidative metabolism in this organelle. Regulates the levels of circadian clock components PER1, PER2, PER3 and CRY2 in the liver. This is NAD-capped RNA hydrolase NUDT12 from Homo sapiens (Human).